We begin with the raw amino-acid sequence, 360 residues long: Photosystem II protein D1 1 (360 aa).

Helical transmembrane passes span 29-46 (YVGW…SATI), 118-133 (HFLI…EWEL), and 142-156 (WICI…AAAA). H118 lines the chlorophyll a pocket. Pheophytin a is bound at residue Y126. The [CaMn4O5] cluster site is built by D170 and E189. Residues 197–218 (FHMLGVAGVFGGSLFSAMHGSL) form a helical membrane-spanning segment. H198 lines the chlorophyll a pocket. Residues H215 and 264-265 (SF) each bind a quinone. H215 contributes to the Fe cation binding site. H272 is a Fe cation binding site. Residues 274–288 (FLAAWPVIGIWFTAL) traverse the membrane as a helical segment. [CaMn4O5] cluster contacts are provided by H332, E333, D342, and A344. Positions 345 to 360 (GTESAPVAVGNADLNG) are excised as a propeptide.

This sequence belongs to the reaction center PufL/M/PsbA/D family. PSII is composed of 1 copy each of membrane proteins PsbA, PsbB, PsbC, PsbD, PsbE, PsbF, PsbH, PsbI, PsbJ, PsbK, PsbL, PsbM, PsbT, PsbX, Psb30/Ycf12, peripheral proteins PsbO, CyanoQ (PsbQ), PsbU, PsbV and a large number of cofactors. It forms dimeric complexes. It depends on The D1/D2 heterodimer binds P680, chlorophylls that are the primary electron donor of PSII, and subsequent electron acceptors. It shares a non-heme iron and each subunit binds pheophytin, quinone, additional chlorophylls, carotenoids and lipids. D1 provides most of the ligands for the Mn4-Ca-O5 cluster of the oxygen-evolving complex (OEC). There is also a Cl(-1) ion associated with D1 and D2, which is required for oxygen evolution. The PSII complex binds additional chlorophylls, carotenoids and specific lipids. as a cofactor. Post-translationally, tyr-161 forms a radical intermediate that is referred to as redox-active TyrZ, YZ or Y-Z. In terms of processing, C-terminally processed by CtpA; processing is essential to allow assembly of the oxygen-evolving complex and thus photosynthetic growth.

The protein localises to the cell inner membrane. The catalysed reaction is 2 a plastoquinone + 4 hnu + 2 H2O = 2 a plastoquinol + O2. Its function is as follows. Photosystem II (PSII) is a light-driven water:plastoquinone oxidoreductase that uses light energy to abstract electrons from H(2)O, generating O(2) and a proton gradient subsequently used for ATP formation. It consists of a core antenna complex that captures photons, and an electron transfer chain that converts photonic excitation into a charge separation. The D1/D2 (PsbA/PsbD) reaction center heterodimer binds P680, the primary electron donor of PSII as well as several subsequent electron acceptors. This is Photosystem II protein D1 1 from Gloeobacter violaceus (strain ATCC 29082 / PCC 7421).